We begin with the raw amino-acid sequence, 270 residues long: Formamidopyrimidine-DNA glycosylase (270 aa).

The Schiff-base intermediate with DNA role is filled by Pro2. Glu3 serves as the catalytic Proton donor. Catalysis depends on Lys57, which acts as the Proton donor; for beta-elimination activity. 3 residues coordinate DNA: His90, Arg109, and Lys150. An FPG-type zinc finger spans residues 235-269 (QIYGKKGCPCPKCGQKIESFTVGQRNSYVCLHCQK). Catalysis depends on Arg259, which acts as the Proton donor; for delta-elimination activity.

Belongs to the FPG family. In terms of assembly, monomer. Requires Zn(2+) as cofactor.

It catalyses the reaction Hydrolysis of DNA containing ring-opened 7-methylguanine residues, releasing 2,6-diamino-4-hydroxy-5-(N-methyl)formamidopyrimidine.. The enzyme catalyses 2'-deoxyribonucleotide-(2'-deoxyribose 5'-phosphate)-2'-deoxyribonucleotide-DNA = a 3'-end 2'-deoxyribonucleotide-(2,3-dehydro-2,3-deoxyribose 5'-phosphate)-DNA + a 5'-end 5'-phospho-2'-deoxyribonucleoside-DNA + H(+). Functionally, involved in base excision repair of DNA damaged by oxidation or by mutagenic agents. Acts as a DNA glycosylase that recognizes and removes damaged bases. Has a preference for oxidized purines, such as 7,8-dihydro-8-oxoguanine (8-oxoG). Has AP (apurinic/apyrimidinic) lyase activity and introduces nicks in the DNA strand. Cleaves the DNA backbone by beta-delta elimination to generate a single-strand break at the site of the removed base with both 3'- and 5'-phosphates. This Actinobacillus succinogenes (strain ATCC 55618 / DSM 22257 / CCUG 43843 / 130Z) protein is Formamidopyrimidine-DNA glycosylase.